A 708-amino-acid chain; its full sequence is Capsid scaffolding protein (708 aa).

Active-site charge relay system residues include His-63, Ser-132, and His-157. 3 disordered regions span residues 269 to 339, 455 to 565, and 593 to 619; these read ASAE…MSHP, HPSY…QQQR, and ALPSAASSSPTTTTVCTPTGELTSGGG. The segment covering 284 to 293 has biased composition (low complexity); sequence PAAGARVPSS. The segment covering 294–311 has biased composition (pro residues); it reads SPSPPVEPPSPVQPPALP. Over residues 326–339 the composition is skewed to low complexity; sequence SPSEPAEAASMSHP. Residues 333 to 352 are interaction with pAP; that stretch reads AASMSHPLSAAVPAATAPPG. Residues 498–513 show a composition bias toward basic residues; that stretch reads KQHRHGGSGGHNKRRK. 2 short sequence motifs (nuclear localization signal) span residues 510-515 and 537-543; these read KRRKET and RARKRLK. Residues 593-611 are compositionally biased toward low complexity; the sequence is ALPSAASSSPTTTTVCTPT. Positions 688 to 708 are interaction with major capsid protein; it reads PPKDMVDLNRRIFVAALNKLE.

This sequence belongs to the herpesviridae capsid scaffolding protein family. Homomultimer. Interacts with major capsid protein. As to quaternary structure, exists in a monomer-dimer equilibrium with the dimer being the active species. Capsid scaffolding protein is cleaved by assemblin after formation of the spherical procapsid. As a result, the capsid obtains its mature, icosahedral shape. Cleavages occur at two or more sites: release (R-site) and maturation (M-site).

The protein localises to the host cytoplasm. Its subcellular location is the host nucleus. It catalyses the reaction Cleaves -Ala-|-Ser- and -Ala-|-Ala- bonds in the scaffold protein.. In terms of biological role, acts as a scaffold protein by binding major capsid protein in the cytoplasm, inducing the nuclear localization of both proteins. Multimerizes in the nucleus such as major capsid protein forms the icosahedral T=16 capsid. Autocatalytic cleavage releases the assembly protein, and subsequently abolishes interaction with major capsid protein. Cleavages products are evicted from the capsid before or during DNA packaging. Its function is as follows. Protease that plays an essential role in virion assembly within the nucleus. Catalyzes the cleavage of the assembly protein after formation of the spherical procapsid. By that cleavage, the capsid matures and gains its icosahedral shape. The cleavage sites seem to include -Ala-Ser-, -Ala-Ala-, as well as Ala-Thr bonds. Assemblin and cleavages products are evicted from the capsid before or during DNA packaging. Functionally, plays a major role in capsid assembly. Acts as a scaffold protein by binding major capsid protein. Multimerizes in the nucleus such as major capsid protein forms the icosahedral T=16 capsid. Cleaved by assemblin after capsid completion. The cleavages products are evicted from the capsid before or during DNA packaging. The sequence is that of Capsid scaffolding protein (UL80) from Homo sapiens (Human).